The following is a 467-amino-acid chain: Glutamate--tRNA ligase (467 aa).

The 'HIGH' region motif lies at 10 to 20 (PSPTGYLHVGG). The 'KMSKS' region motif lies at 238-242 (RLSKR). Lysine 241 provides a ligand contact to ATP.

Belongs to the class-I aminoacyl-tRNA synthetase family. Glutamate--tRNA ligase type 1 subfamily. As to quaternary structure, monomer.

It is found in the cytoplasm. The enzyme catalyses tRNA(Glu) + L-glutamate + ATP = L-glutamyl-tRNA(Glu) + AMP + diphosphate. Catalyzes the attachment of glutamate to tRNA(Glu) in a two-step reaction: glutamate is first activated by ATP to form Glu-AMP and then transferred to the acceptor end of tRNA(Glu). The polypeptide is Glutamate--tRNA ligase (Citrifermentans bemidjiense (strain ATCC BAA-1014 / DSM 16622 / JCM 12645 / Bem) (Geobacter bemidjiensis)).